Here is a 156-residue protein sequence, read N- to C-terminus: Transcription elongation factor GreA (156 aa).

It belongs to the GreA/GreB family.

Functionally, necessary for efficient RNA polymerase transcription elongation past template-encoded arresting sites. The arresting sites in DNA have the property of trapping a certain fraction of elongating RNA polymerases that pass through, resulting in locked ternary complexes. Cleavage of the nascent transcript by cleavage factors such as GreA or GreB allows the resumption of elongation from the new 3'terminus. GreA releases sequences of 2 to 3 nucleotides. The polypeptide is Transcription elongation factor GreA (Thermomicrobium roseum (strain ATCC 27502 / DSM 5159 / P-2)).